The chain runs to 167 residues: Endoribonuclease YbeY (167 aa).

H126, H130, and H136 together coordinate Zn(2+).

This sequence belongs to the endoribonuclease YbeY family. Requires Zn(2+) as cofactor.

Its subcellular location is the cytoplasm. Its function is as follows. Single strand-specific metallo-endoribonuclease involved in late-stage 70S ribosome quality control and in maturation of the 3' terminus of the 16S rRNA. The sequence is that of Endoribonuclease YbeY from Novosphingobium aromaticivorans (strain ATCC 700278 / DSM 12444 / CCUG 56034 / CIP 105152 / NBRC 16084 / F199).